We begin with the raw amino-acid sequence, 212 residues long: Endothelin-1 (212 aa).

An N-terminal signal peptide occupies residues 1-17 (MDYLLMIFSLLFVACQG). A propeptide spanning residues 18–50 (APETAVLGAELSAVGENGGEKPTPSPPWRLRRS) is cleaved from the precursor. Cystine bridges form between cysteine 53–cysteine 67 and cysteine 55–cysteine 63. A propeptide spanning residues 74 to 212 (VNTPEHVVPY…RYVTHNRAHW (139 aa)) is cleaved from the precursor. An endothelin-like region spans residues 109–123 (CQCASQKDKKCWNFC). Composition is skewed to basic and acidic residues over residues 168 to 181 (RSSEEHLRQTRSET) and 189 to 205 (SFHDPKLKGKPSRERYV). A disordered region spans residues 168–212 (RSSEEHLRQTRSETMRNSVKSSFHDPKLKGKPSRERYVTHNRAHW).

This sequence belongs to the endothelin/sarafotoxin family. Expressed in lung, placental stem villi vessels and in cultured placental vascular smooth muscle cells.

It is found in the secreted. Endothelins are endothelium-derived vasoconstrictor peptides. Probable ligand for G-protein coupled receptors EDNRA and EDNRB which activates PTK2B, BCAR1, BCAR3 and, GTPases RAP1 and RHOA cascade in glomerular mesangial cells. Also binds the DEAR/FBXW7-AS1 receptor. Promotes mesenteric arterial wall remodeling via activation of ROCK signaling and subsequent colocalization of NFATC3 with F-actin filaments. NFATC3 then translocates to the nucleus where it subsequently promotes the transcription of the smooth muscle hypertrophy and differentiation marker ACTA2. This is Endothelin-1 (EDN1) from Homo sapiens (Human).